The chain runs to 265 residues: Probable ribose-5-phosphate isomerase 2 (265 aa).

Ala2 is modified (N-acetylalanine). At Ser96 the chain carries Phosphoserine.

The protein belongs to the ribose 5-phosphate isomerase family.

Its subcellular location is the cytoplasm. It catalyses the reaction aldehydo-D-ribose 5-phosphate = D-ribulose 5-phosphate. Its pathway is carbohydrate degradation; pentose phosphate pathway; D-ribose 5-phosphate from D-ribulose 5-phosphate (non-oxidative stage): step 1/1. Its function is as follows. Catalyzes the reversible conversion of ribose-5-phosphate to ribulose 5-phosphate. The protein is Probable ribose-5-phosphate isomerase 2 (RPI2) of Arabidopsis thaliana (Mouse-ear cress).